We begin with the raw amino-acid sequence, 360 residues long: Nucleoporin SEH1 (360 aa).

WD repeat units lie at residues 10 to 49 (DHKDLIHDVSFDFHGRRMATCSSDQSVKVWDKSESGEWHC), 55 to 96 (THSG…SNDK), 111 to 152 (DSRT…NLSQ), 160 to 210 (SCKL…RKYA), 217 to 258 (TVTD…KELT), and 276 to 315 (NHNSQVWRVSWNITGTVLASSGDDGCVRLWKANYMDNWKC). Lys-12 participates in a covalent cross-link: Glycyl lysine isopeptide (Lys-Gly) (interchain with G-Cter in SUMO2). Position 190 is a phosphoserine (Ser-190). Low complexity predominate over residues 324–342 (SPVNGSSQQGNSNPSVGSN). The segment at 324-360 (SPVNGSSQQGNSNPSVGSNIPSLQNSLNGSSAGRKHS) is disordered. Residues 343–354 (IPSLQNSLNGSS) show a composition bias toward polar residues.

It belongs to the WD repeat SEC13 family. In terms of assembly, component of the Nup107-160 subcomplex of the nuclear pore complex (NPC). The Nup107-160 subcomplex includes NUP160, NUP133, NUP107, NUP98, NUP85, NUP43, NUP37, SEH1 and SEC13. The SEH1 subunit appears to be only weakly associated with the Nup107-160 subcomplex. Component of the GATOR2 subcomplex, composed of MIOS, SEC13, SEH1L, WDR24 and WDR59. The GATOR2 complex interacts with CASTOR1 and CASTOR2; the interaction is negatively regulated by arginine. The GATOR2 complex interacts with SESN1, SESN2 and SESN3; the interaction is negatively regulated by amino acids. SESN1, SESN2 and SESN3 convey leucine availability via direct interaction with SEH1L and WDR24.

It is found in the chromosome. It localises to the centromere. Its subcellular location is the kinetochore. The protein localises to the nucleus. The protein resides in the nuclear pore complex. It is found in the lysosome membrane. With respect to regulation, the GATOR2 complex is negatively regulated by the upstream amino acid sensors CASTOR1 and SESN2, which sequester the GATOR2 complex in absence of amino acids. In the presence of abundant amino acids, GATOR2 is released from CASTOR1 and SESN2 and activated. Functionally, component of the Nup107-160 subcomplex of the nuclear pore complex (NPC). The Nup107-160 subcomplex is required for the assembly of a functional NPC. The Nup107-160 subcomplex is also required for normal kinetochore microtubule attachment, mitotic progression and chromosome segregation. This subunit plays a role in recruitment of the Nup107-160 subcomplex to the kinetochore. In terms of biological role, as a component of the GATOR2 complex, functions as an activator of the amino acid-sensing branch of the mTORC1 signaling pathway. The GATOR2 complex indirectly activates mTORC1 through the inhibition of the GATOR1 subcomplex. GATOR2 probably acts as an E3 ubiquitin-protein ligase toward GATOR1. In the presence of abundant amino acids, the GATOR2 complex mediates ubiquitination of the NPRL2 core component of the GATOR1 complex, leading to GATOR1 inactivation. In the absence of amino acids, GATOR2 is inhibited, activating the GATOR1 complex. Within the GATOR2 complex, SEC13 and SEH1L are required to stabilize the complex. The polypeptide is Nucleoporin SEH1 (SEH1L) (Bos taurus (Bovine)).